Reading from the N-terminus, the 369-residue chain is Endophilin-A (369 aa).

A BAR domain is found at 18–248; sequence TEKMGGAEGT…LQEKRSEAES (231 aa). Residues 227 to 247 adopt a coiled-coil conformation; it reads QCADVLRGLQETLQEKRSEAE. A compositionally biased stretch (low complexity) spans 275–294; it reads GTPSHISSSASPLPSPMRSP. Residues 275–296 are disordered; sequence GTPSHISSSASPLPSPMRSPAK. An SH3 domain is found at 305–364; that stretch reads QQQPCCQALYDFDPENPGELGFKENDIITLLNRVDDNWYEGAVNGRTGYFPQSYVQVQVP.

Belongs to the endophilin family.

Its subcellular location is the cytoplasm. The protein localises to the membrane. In terms of biological role, required presynaptically at the neuromuscular junction. Implicated in synaptic vesicle endocytosis. In Drosophila pseudoobscura pseudoobscura (Fruit fly), this protein is Endophilin-A.